The sequence spans 808 residues: Glycerol-3-phosphate acyltransferase (808 aa).

The short motif at 306-311 (HRSHMD) is the HXXXXD motif element.

This sequence belongs to the GPAT/DAPAT family.

Its subcellular location is the cell inner membrane. The enzyme catalyses sn-glycerol 3-phosphate + an acyl-CoA = a 1-acyl-sn-glycero-3-phosphate + CoA. It participates in phospholipid metabolism; CDP-diacylglycerol biosynthesis; CDP-diacylglycerol from sn-glycerol 3-phosphate: step 1/3. The protein is Glycerol-3-phosphate acyltransferase of Vibrio parahaemolyticus serotype O3:K6 (strain RIMD 2210633).